The chain runs to 327 residues: Cytochrome f (327 aa).

Positions 1–24 are cleaved as a signal peptide; that stretch reads MKRIYLALCALLLLLGTGSRPAAA. Heme is bound by residues Tyr-25, Cys-45, Cys-48, and His-49. The helical transmembrane segment at 293–313 threads the bilayer; the sequence is VKWLVAFLAAVAITQLLLVLK.

Belongs to the cytochrome f family. In terms of assembly, the 4 large subunits of the cytochrome b6-f complex are cytochrome b6, subunit IV (17 kDa polypeptide, PetD), cytochrome f and the Rieske protein, while the 4 small subunits are PetG, PetL, PetM and PetN. The complex functions as a dimer. The cofactor is heme.

The protein resides in the cellular thylakoid membrane. Its function is as follows. Component of the cytochrome b6-f complex, which mediates electron transfer between photosystem II (PSII) and photosystem I (PSI), cyclic electron flow around PSI, and state transitions. In Synechococcus sp. (strain JA-3-3Ab) (Cyanobacteria bacterium Yellowstone A-Prime), this protein is Cytochrome f.